Reading from the N-terminus, the 394-residue chain is Elongation factor Tu (394 aa).

The tr-type G domain occupies 10–204 (KPHVNVGTIG…ALDTYIPEPE (195 aa)). The G1 stretch occupies residues 19–26 (GHVDHGKT). 19–26 (GHVDHGKT) contributes to the GTP binding site. Threonine 26 provides a ligand contact to Mg(2+). The interval 60 to 64 (GITIN) is G2. Residues 81 to 84 (DCPG) are G3. GTP-binding positions include 81–85 (DCPGH) and 136–139 (NKCD). Positions 136-139 (NKCD) are G4. Residues 174–176 (SAL) are G5.

This sequence belongs to the TRAFAC class translation factor GTPase superfamily. Classic translation factor GTPase family. EF-Tu/EF-1A subfamily. As to quaternary structure, monomer.

The protein localises to the cytoplasm. It carries out the reaction GTP + H2O = GDP + phosphate + H(+). Its function is as follows. GTP hydrolase that promotes the GTP-dependent binding of aminoacyl-tRNA to the A-site of ribosomes during protein biosynthesis. The sequence is that of Elongation factor Tu from Shewanella sediminis (strain HAW-EB3).